The primary structure comprises 446 residues: tRNA modification GTPase MnmE (446 aa).

Positions 24, 81, and 120 each coordinate (6S)-5-formyl-5,6,7,8-tetrahydrofolate. One can recognise a TrmE-type G domain in the interval 216 to 368 (GLHAVLIGPP…LHIRLRELAL (153 aa)). Asn226 provides a ligand contact to K(+). Residues 226–231 (NAGKSS), 245–251 (TDVAGTT), and 270–273 (DTAG) contribute to the GTP site. Ser230 is a Mg(2+) binding site. 3 residues coordinate K(+): Thr245, Val247, and Thr250. A Mg(2+)-binding site is contributed by Thr251. Lys446 contributes to the (6S)-5-formyl-5,6,7,8-tetrahydrofolate binding site.

This sequence belongs to the TRAFAC class TrmE-Era-EngA-EngB-Septin-like GTPase superfamily. TrmE GTPase family. In terms of assembly, homodimer. Heterotetramer of two MnmE and two MnmG subunits. K(+) serves as cofactor.

Its subcellular location is the cytoplasm. Exhibits a very high intrinsic GTPase hydrolysis rate. Involved in the addition of a carboxymethylaminomethyl (cmnm) group at the wobble position (U34) of certain tRNAs, forming tRNA-cmnm(5)s(2)U34. The protein is tRNA modification GTPase MnmE of Xanthomonas oryzae pv. oryzae (strain PXO99A).